Here is a 252-residue protein sequence, read N- to C-terminus: tRNA (guanine-N(7)-)-methyltransferase (252 aa).

Glu-75, Glu-100, Asp-127, and Asp-150 together coordinate S-adenosyl-L-methionine. Residue Asp-150 is part of the active site. Lys-154 lines the substrate pocket. Residues Arg-156 to Arg-161 are interaction with RNA. Residues Asp-186 and Thr-223–Glu-226 contribute to the substrate site.

This sequence belongs to the class I-like SAM-binding methyltransferase superfamily. TrmB family.

It catalyses the reaction guanosine(46) in tRNA + S-adenosyl-L-methionine = N(7)-methylguanosine(46) in tRNA + S-adenosyl-L-homocysteine. It participates in tRNA modification; N(7)-methylguanine-tRNA biosynthesis. Catalyzes the formation of N(7)-methylguanine at position 46 (m7G46) in tRNA. This is tRNA (guanine-N(7)-)-methyltransferase from Xanthomonas oryzae pv. oryzae (strain MAFF 311018).